Reading from the N-terminus, the 57-residue chain is MAVQQRRSSKHRRDKRRSHDALTLQTLSVCKKCGKKKLSHRVCSCGMYGELRVKKAH.

The tract at residues 1 to 20 (MAVQQRRSSKHRRDKRRSHD) is disordered. A compositionally biased stretch (basic residues) spans 7–18 (RSSKHRRDKRRS).

It belongs to the bacterial ribosomal protein bL32 family.

This chain is Large ribosomal subunit protein bL32 (rpmF), found in Mycoplasma genitalium (strain ATCC 33530 / DSM 19775 / NCTC 10195 / G37) (Mycoplasmoides genitalium).